The following is a 139-amino-acid chain: Holo-[acyl-carrier-protein] synthase (139 aa).

Asp-9 and Glu-63 together coordinate Mg(2+).

It belongs to the P-Pant transferase superfamily. AcpS family. It depends on Mg(2+) as a cofactor.

The protein localises to the cytoplasm. The enzyme catalyses apo-[ACP] + CoA = holo-[ACP] + adenosine 3',5'-bisphosphate + H(+). Functionally, transfers the 4'-phosphopantetheine moiety from coenzyme A to a Ser of acyl-carrier-protein. The polypeptide is Holo-[acyl-carrier-protein] synthase (Wigglesworthia glossinidia brevipalpis).